The following is a 135-amino-acid chain: Galectin-1 (135 aa).

The residue at position 2 (alanine 2) is an N-acetylalanine. In terms of domain architecture, Galectin spans 4 to 135; sequence GLVASNLNLK…DFKIKCVAFE (132 aa). Lysine 13, lysine 19, and lysine 29 each carry N6-acetyllysine. The residue at position 30 (serine 30) is a Phosphoserine. Residues 45–49, histidine 53, asparagine 62, and 69–72 each bind a beta-D-galactoside; these read HFNPR and WGTE. N6-acetyllysine; alternate is present on lysine 108. The residue at position 108 (lysine 108) is an N6-succinyllysine; alternate. Lysine 128 carries the N6-acetyllysine modification.

As to quaternary structure, binds LGALS3BP. Interacts with CD2, CD3, CD4, CD6, CD7, CD43, ALCAM and CD45. Interacts with laminin. Interacts with SUSD2. Exists in a reversible and active monomer-homodimer equilibrium, the mononomer/dimer state is regulated by lectin concentration. Interacts with cargo receptor TMED10; the interaction mediates the translocation from the cytoplasm into the ERGIC (endoplasmic reticulum-Golgi intermediate compartment) and thereby secretion.

It localises to the cytoplasm. It is found in the secreted. The protein localises to the extracellular space. The protein resides in the extracellular matrix. Functionally, lectin that binds beta-galactoside and a wide array of complex carbohydrates. Plays a role in regulating apoptosis, cell proliferation and cell differentiation. Inhibits CD45 protein phosphatase activity and therefore the dephosphorylation of Lyn kinase. Strong inducer of T-cell apoptosis. This chain is Galectin-1 (LGALS1), found in Cricetulus griseus (Chinese hamster).